Here is a 1308-residue protein sequence, read N- to C-terminus: Tau-tubulin kinase 1 (1308 aa).

The Protein kinase domain maps to 34 to 297 (WKVLKKIGGG…LIMSVFENSM (264 aa)). ATP-binding positions include 40–48 (IGGGGFGEI) and lysine 63. The active-site Proton acceptor is aspartate 154. Disordered stretches follow at residues 364 to 397 (LSDQENAPPILPGRPPEGLGPGPHLVPHPGGPEA), 418 to 448 (PCVEEEQSRGVGVPSSPVRAPPDSPTTPVRS), 474 to 671 (ERRS…APPF), 720 to 899 (QVPL…AGGG), 985 to 1085 (EMES…LARL), and 1097 to 1308 (RLAS…PGAR). At serine 441 the chain carries Phosphoserine. Residues 485-496 (PSRQACSSQPAQ) show a composition bias toward polar residues. Position 541 is a phosphoserine (serine 541). Basic and acidic residues-rich tracts occupy residues 541 to 555 (SKEWVIIDKETELKD) and 574 to 589 (ELRPLPEEGEERRRLG). Over residues 638–647 (SPSHSPLHSG) the composition is skewed to low complexity. Residues 735–769 (GEEEEEEEEEEEEEEEEEEEEEEEEEEEEEEEEEA) show a composition bias toward acidic residues. The segment covering 786-795 (GSERSTERSQ) has biased composition (basic and acidic residues). 2 stretches are compositionally biased toward polar residues: residues 868-885 (PTGSQLDVSEPGTLSSIL) and 1020-1035 (ASQQEPVTKKGTTISP). Positions 1097 to 1107 (RLASGASSSSS) are enriched in low complexity.

The protein belongs to the protein kinase superfamily. CK1 Ser/Thr protein kinase family. Requires Mg(2+) as cofactor. Mn(2+) is required as a cofactor. In terms of tissue distribution, expressed in the brain. Strong expression in the cortical layers, the CA1 layers of the hippocampus and the granular layer of the cerebellum. Also expressed in the large cortical pyramidal cells in the temporal cortex, the CA1 pyramidal neurons and the cerebellum granular neurons.

The protein resides in the cytoplasm. It catalyses the reaction L-seryl-[protein] + ATP = O-phospho-L-seryl-[protein] + ADP + H(+). It carries out the reaction L-threonyl-[protein] + ATP = O-phospho-L-threonyl-[protein] + ADP + H(+). Its function is as follows. Serine/threonine kinase which is able to phosphorylate TAU on serine, threonine and tyrosine residues. Induces aggregation of TAU. This Mus musculus (Mouse) protein is Tau-tubulin kinase 1 (Ttbk1).